The following is a 114-amino-acid chain: U5-lycotoxin-Ls1a (114 aa).

An N-terminal signal peptide occupies residues 1–20; sequence MKYQILFGVVFLTLLSYCYS. Residues 21–45 constitute a propeptide that is removed on maturation; the sequence is EIEDEFENFVDEEMVEADDPFSLAR. Disulfide bonds link C51/C66, C65/C93, and C77/C91.

The protein belongs to the neurotoxin 19 (CSTX) family. 04 (U1-Lctx) subfamily. In terms of tissue distribution, expressed by the venom gland.

The protein resides in the secreted. The chain is U5-lycotoxin-Ls1a from Lycosa singoriensis (Wolf spider).